The sequence spans 151 residues: 3-hydroxyacyl-[acyl-carrier-protein] dehydratase FabZ (151 aa).

Histidine 54 is an active-site residue.

This sequence belongs to the thioester dehydratase family. FabZ subfamily.

Its subcellular location is the cytoplasm. It catalyses the reaction a (3R)-hydroxyacyl-[ACP] = a (2E)-enoyl-[ACP] + H2O. Its function is as follows. Involved in unsaturated fatty acids biosynthesis. Catalyzes the dehydration of short chain beta-hydroxyacyl-ACPs and long chain saturated and unsaturated beta-hydroxyacyl-ACPs. The polypeptide is 3-hydroxyacyl-[acyl-carrier-protein] dehydratase FabZ (Sodalis glossinidius (strain morsitans)).